The following is a 658-amino-acid chain: UvrABC system protein C (658 aa).

The GIY-YIG domain occupies 62 to 140; it reads PKPGVYRMLD…IKRFRPPYNV (79 aa). In terms of domain architecture, UVR spans 250–285; it reads GAVQREIEAQMHKAAEDLDFERAAMLRDRLRAATFI.

This sequence belongs to the UvrC family. In terms of assembly, interacts with UvrB in an incision complex.

It is found in the cytoplasm. Its function is as follows. The UvrABC repair system catalyzes the recognition and processing of DNA lesions. UvrC both incises the 5' and 3' sides of the lesion. The N-terminal half is responsible for the 3' incision and the C-terminal half is responsible for the 5' incision. In Novosphingobium aromaticivorans (strain ATCC 700278 / DSM 12444 / CCUG 56034 / CIP 105152 / NBRC 16084 / F199), this protein is UvrABC system protein C.